Reading from the N-terminus, the 111-residue chain is Small ribosomal subunit protein bS16 (111 aa).

Belongs to the bacterial ribosomal protein bS16 family.

The sequence is that of Small ribosomal subunit protein bS16 from Rickettsia canadensis (strain McKiel).